The chain runs to 322 residues: Lipoyl synthase (322 aa).

7 residues coordinate [4Fe-4S] cluster: Cys69, Cys74, Cys80, Cys95, Cys99, Cys102, and Ser309. The 218-residue stretch at 81–298 (FNHGTATFMI…GVKAKALGFD (218 aa)) folds into the Radical SAM core domain.

It belongs to the radical SAM superfamily. Lipoyl synthase family. It depends on [4Fe-4S] cluster as a cofactor.

It localises to the cytoplasm. The catalysed reaction is [[Fe-S] cluster scaffold protein carrying a second [4Fe-4S](2+) cluster] + N(6)-octanoyl-L-lysyl-[protein] + 2 oxidized [2Fe-2S]-[ferredoxin] + 2 S-adenosyl-L-methionine + 4 H(+) = [[Fe-S] cluster scaffold protein] + N(6)-[(R)-dihydrolipoyl]-L-lysyl-[protein] + 4 Fe(3+) + 2 hydrogen sulfide + 2 5'-deoxyadenosine + 2 L-methionine + 2 reduced [2Fe-2S]-[ferredoxin]. It participates in protein modification; protein lipoylation via endogenous pathway; protein N(6)-(lipoyl)lysine from octanoyl-[acyl-carrier-protein]: step 2/2. Catalyzes the radical-mediated insertion of two sulfur atoms into the C-6 and C-8 positions of the octanoyl moiety bound to the lipoyl domains of lipoate-dependent enzymes, thereby converting the octanoylated domains into lipoylated derivatives. This is Lipoyl synthase from Psychromonas ingrahamii (strain DSM 17664 / CCUG 51855 / 37).